The sequence spans 513 residues: Microtubule-associated protein 70-5 (513 aa).

Disordered stretches follow at residues 1-20, 60-81, 347-367, and 393-413; these read MTAA…SQLK, KLGA…LEEE, FLTS…GSVT, and ANGL…EDGN. Residues 9–18 show a composition bias toward polar residues; sequence VSDTSSLQSQ. Positions 10-322 form a coiled coil; that stretch reads SDTSSLQSQL…LKLRLKTIED (313 aa). A compositionally biased stretch (basic and acidic residues) spans 60–80; the sequence is KLGATENQVDQKELERKKLEE. Positions 190-400 are required for targeting to microtubules; sequence FLEKINRQKV…ITANGLTDQH (211 aa). Positions 426 to 501 form a coiled coil; that stretch reads DRLQKEVIAL…EESKLCRKAK (76 aa).

The protein belongs to the MAP70 family. In terms of assembly, interacts with MAP70.1 and itself.

It is found in the cytoplasm. The protein resides in the cytoskeleton. In terms of biological role, plant-specific protein that interact with microtubules and regulates microtubule dynamics. May play a role in anisotropic cell expansion and organ growth. In association with MAP70.1, is essential for the normal banding pattern of secondary cell wall and for the proper development of xylem tracheary elements and wood formation. The polypeptide is Microtubule-associated protein 70-5 (MAP70.5) (Arabidopsis thaliana (Mouse-ear cress)).